The following is a 222-amino-acid chain: Phosphoribosylformylglycinamidine synthase subunit PurQ (222 aa).

The 221-residue stretch at 2–222 folds into the Glutamine amidotransferase type-1 domain; sequence KAAVITFPGS…RALLGGMALV (221 aa). The Nucleophile role is filled by Cys86. Residues His194 and Glu196 contribute to the active site.

In terms of assembly, part of the FGAM synthase complex composed of 1 PurL, 1 PurQ and 2 PurS subunits.

Its subcellular location is the cytoplasm. The catalysed reaction is N(2)-formyl-N(1)-(5-phospho-beta-D-ribosyl)glycinamide + L-glutamine + ATP + H2O = 2-formamido-N(1)-(5-O-phospho-beta-D-ribosyl)acetamidine + L-glutamate + ADP + phosphate + H(+). It carries out the reaction L-glutamine + H2O = L-glutamate + NH4(+). The protein operates within purine metabolism; IMP biosynthesis via de novo pathway; 5-amino-1-(5-phospho-D-ribosyl)imidazole from N(2)-formyl-N(1)-(5-phospho-D-ribosyl)glycinamide: step 1/2. Its function is as follows. Part of the phosphoribosylformylglycinamidine synthase complex involved in the purines biosynthetic pathway. Catalyzes the ATP-dependent conversion of formylglycinamide ribonucleotide (FGAR) and glutamine to yield formylglycinamidine ribonucleotide (FGAM) and glutamate. The FGAM synthase complex is composed of three subunits. PurQ produces an ammonia molecule by converting glutamine to glutamate. PurL transfers the ammonia molecule to FGAR to form FGAM in an ATP-dependent manner. PurS interacts with PurQ and PurL and is thought to assist in the transfer of the ammonia molecule from PurQ to PurL. The polypeptide is Phosphoribosylformylglycinamidine synthase subunit PurQ (Cereibacter sphaeroides (strain ATCC 17023 / DSM 158 / JCM 6121 / CCUG 31486 / LMG 2827 / NBRC 12203 / NCIMB 8253 / ATH 2.4.1.) (Rhodobacter sphaeroides)).